Here is a 110-residue protein sequence, read N- to C-terminus: MSLSEARFHDLVDATQQALEDLFDESGLDLDMENSAGVLTVKFEGGAQLIFSRQEPLRQLWLADRSGGFHFDYDEDSGKWVCEKSEELLGEMLERIVWERAGEKLDFDEI.

Belongs to the frataxin family.

Its function is as follows. Involved in iron-sulfur (Fe-S) cluster assembly. May act as a regulator of Fe-S biogenesis. This chain is Iron-sulfur cluster assembly protein CyaY, found in Pseudomonas putida (strain ATCC 700007 / DSM 6899 / JCM 31910 / BCRC 17059 / LMG 24140 / F1).